The chain runs to 330 residues: MIVLGIETSCDETSVAILSDGKILSNVVSSQIDIHKKFGGVVPEIAARHHLSNLPIVFKNAIDMANISIDQIDLISVTYGPGLIGALLVGISFAKGLSLRLGKPLIGVNHIVGHVFANYITYPHLKPPYIVLMVSGGHTEILLVKQDDEIEVLGKTVDDAAGEAFDKVARILGLGYPGGPEIDKLSKNGDENKFNFPRPMMDSKSYNFSFSGLKTAVLYTVQKFDKDNVPKEDIAASFQKAVVEILLKKTFKAAKDLNVNTIVLAGGVAANSYLRKKAQKLSEKQNIKVLIPPLEFCTDNAAMIAMAGYKLYKKGISSDSTLEAVPNLKI.

2 residues coordinate Fe cation: His-110 and His-114. Residues 133–137 (MVSGG), Asp-166, Gly-179, Asp-183, and Asn-271 each bind substrate. Asp-299 is a Fe cation binding site.

Belongs to the KAE1 / TsaD family. Requires Fe(2+) as cofactor.

The protein resides in the cytoplasm. The catalysed reaction is L-threonylcarbamoyladenylate + adenosine(37) in tRNA = N(6)-L-threonylcarbamoyladenosine(37) in tRNA + AMP + H(+). Its function is as follows. Required for the formation of a threonylcarbamoyl group on adenosine at position 37 (t(6)A37) in tRNAs that read codons beginning with adenine. Is involved in the transfer of the threonylcarbamoyl moiety of threonylcarbamoyl-AMP (TC-AMP) to the N6 group of A37, together with TsaE and TsaB. TsaD likely plays a direct catalytic role in this reaction. In Thermosipho africanus (strain TCF52B), this protein is tRNA N6-adenosine threonylcarbamoyltransferase.